A 354-amino-acid chain; its full sequence is 3-dehydroquinate synthase (354 aa).

Residues Asp-39, Tyr-45, 68-71, 100-104, 124-125, Lys-136, Lys-145, and 163-166 contribute to the NAD(+) site; these read EKTK, GATGD, TT, and FLKT. Zn(2+) contacts are provided by Glu-178, His-242, and His-256.

It belongs to the sugar phosphate cyclases superfamily. Dehydroquinate synthase family. It depends on NAD(+) as a cofactor. Co(2+) is required as a cofactor. The cofactor is Zn(2+).

Its subcellular location is the cytoplasm. It carries out the reaction 7-phospho-2-dehydro-3-deoxy-D-arabino-heptonate = 3-dehydroquinate + phosphate. It participates in metabolic intermediate biosynthesis; chorismate biosynthesis; chorismate from D-erythrose 4-phosphate and phosphoenolpyruvate: step 2/7. In terms of biological role, catalyzes the conversion of 3-deoxy-D-arabino-heptulosonate 7-phosphate (DAHP) to dehydroquinate (DHQ). The sequence is that of 3-dehydroquinate synthase from Staphylococcus aureus (strain MRSA252).